Reading from the N-terminus, the 401-residue chain is Probable N-acetyl-gamma-glutamyl-phosphate reductase, chloroplastic (401 aa).

A chloroplast-targeting transit peptide spans 1–48 (MSTASAFSSIQGCWFKGERKIRVADKRAKRLTLGSHVASPSSMSFRVS). Residue C205 is part of the active site.

The protein belongs to the NAGSA dehydrogenase family. Type 1 subfamily. In terms of assembly, homotetramer.

The protein localises to the plastid. It localises to the chloroplast. It catalyses the reaction N-acetyl-L-glutamate 5-semialdehyde + phosphate + NADP(+) = N-acetyl-L-glutamyl 5-phosphate + NADPH + H(+). The protein operates within amino-acid biosynthesis; L-arginine biosynthesis; N(2)-acetyl-L-ornithine from L-glutamate: step 3/4. The sequence is that of Probable N-acetyl-gamma-glutamyl-phosphate reductase, chloroplastic from Arabidopsis thaliana (Mouse-ear cress).